The following is a 273-amino-acid chain: Structural protein ORF273 (273 aa).

It localises to the virion. The protein is Structural protein ORF273 of Acidianus convivator (ATV).